The sequence spans 310 residues: MRGKKRKTVCKAKGKLTSKSCMCTKANARYTCNCFSKTLPFNEKAIKCTIPEKINSEINISKSEMLLKADKYTNAIYKHSKLRKIFKAVKENLSTTNFATKSKGIVHSNFNDSKPIHSPEIKNYTDFNCDFMHPCGLCSPKNFLSEVYKLLRFYNSTVVQIQVYSRNGLLVNSLHEKLMEIANLIVNKGEQTVSETFFHEQKTAIAINRFLRGTVPHTELTRKEAMMPVNVNSKHRKNSGVYSLYINAPTEKDLFCAAHLCVQFSIRYPADILLNVSKLTQPLLLKEHLIIYNTFNRYIYWDDYGKLLKT.

This sequence belongs to the herpesviridae U84 family.

In Human herpesvirus 7 (strain JI) (HHV-7), this protein is Protein U84 (U84).